Consider the following 408-residue polypeptide: tRNA wybutosine-synthesizing protein 2 homolog (408 aa).

Residues Ser201, Lys208, Glu248, and 276–277 (DN) contribute to the S-adenosyl-L-methionine site.

This sequence belongs to the class I-like SAM-binding methyltransferase superfamily. TRM5/TYW2 family.

It carries out the reaction 4-demethylwyosine(37) in tRNA(Phe) + S-adenosyl-L-methionine = 4-demethyl-7-[(3S)-3-amino-3-carboxypropyl]wyosine(37) in tRNA(Phe) + S-methyl-5'-thioadenosine + H(+). Its pathway is tRNA modification; wybutosine-tRNA(Phe) biosynthesis. Its function is as follows. S-adenosyl-L-methionine-dependent transferase that acts as a component of the wybutosine biosynthesis pathway. Wybutosine is a hyper modified guanosine with a tricyclic base found at the 3'-position adjacent to the anticodon of eukaryotic phenylalanine tRNA. Catalyzes the transfer of the alpha-amino-alpha-carboxypropyl (acp) group from S-adenosyl-L-methionine to the C-7 position of 4-demethylwyosine (imG-14) to produce wybutosine-86. This chain is tRNA wybutosine-synthesizing protein 2 homolog (trmt12), found in Danio rerio (Zebrafish).